Reading from the N-terminus, the 72-residue chain is Large ribosomal subunit protein uL29 (72 aa).

The protein belongs to the universal ribosomal protein uL29 family.

This is Large ribosomal subunit protein uL29 from Caldicellulosiruptor bescii (strain ATCC BAA-1888 / DSM 6725 / KCTC 15123 / Z-1320) (Anaerocellum thermophilum).